The primary structure comprises 272 residues: HMP-PP phosphatase (272 aa).

Aspartate 8 acts as the Nucleophile in catalysis. The Mg(2+) site is built by aspartate 8, aspartate 10, and aspartate 212.

It belongs to the HAD-like hydrolase superfamily. Cof family. It depends on Mg(2+) as a cofactor.

It carries out the reaction 4-amino-2-methyl-5-(diphosphooxymethyl)pyrimidine + H2O = 4-amino-2-methyl-5-(phosphooxymethyl)pyrimidine + phosphate + H(+). Its function is as follows. Catalyzes the hydrolysis of 4-amino-2-methyl-5-hydroxymethylpyrimidine pyrophosphate (HMP-PP) to 4-amino-2-methyl-5-hydroxymethylpyrimidine phosphate (HMP-P). This Escherichia coli O157:H7 protein is HMP-PP phosphatase.